Reading from the N-terminus, the 237-residue chain is NADPH-dependent FMN reductase ArsH (237 aa).

FMN contacts are provided by residues 39-46 and 102-107; these read SNRECSYS and SPERHG.

The protein belongs to the ArsH family. As to quaternary structure, homotetramer. The cofactor is FMN.

Has NADPH-dependent FMN reductase activity and high NADPH-dependent ferric reductase activity with highest activity for Fe(3+) as substrate. No activity with NADH, iron trichloride, Cu(2+) or Ag(+). May be involved in cytosolic ferric iron assimilation as an NADPH-dependent ferric reductase in vivo. This is NADPH-dependent FMN reductase ArsH from Acidithiobacillus ferrooxidans (strain ATCC 23270 / DSM 14882 / CIP 104768 / NCIMB 8455) (Ferrobacillus ferrooxidans (strain ATCC 23270)).